A 338-amino-acid polypeptide reads, in one-letter code: Glycerol-3-phosphate dehydrogenase [NAD(P)+] (338 aa).

Ser13, Trp14, and Lys108 together coordinate NADPH. Sn-glycerol 3-phosphate is bound by residues Lys108, Gly139, and Ser141. Ala143 is a binding site for NADPH. 5 residues coordinate sn-glycerol 3-phosphate: Lys194, Asp247, Ser257, Arg258, and Asn259. Lys194 functions as the Proton acceptor in the catalytic mechanism. Arg258 lines the NADPH pocket. 2 residues coordinate NADPH: Val282 and Glu284.

This sequence belongs to the NAD-dependent glycerol-3-phosphate dehydrogenase family.

It is found in the cytoplasm. The enzyme catalyses sn-glycerol 3-phosphate + NAD(+) = dihydroxyacetone phosphate + NADH + H(+). It carries out the reaction sn-glycerol 3-phosphate + NADP(+) = dihydroxyacetone phosphate + NADPH + H(+). It functions in the pathway membrane lipid metabolism; glycerophospholipid metabolism. Functionally, catalyzes the reduction of the glycolytic intermediate dihydroxyacetone phosphate (DHAP) to sn-glycerol 3-phosphate (G3P), the key precursor for phospholipid synthesis. The chain is Glycerol-3-phosphate dehydrogenase [NAD(P)+] from Streptococcus gordonii (strain Challis / ATCC 35105 / BCRC 15272 / CH1 / DL1 / V288).